We begin with the raw amino-acid sequence, 217 residues long: Adenylate kinase (217 aa).

10 to 15 provides a ligand contact to ATP; sequence GAGKGT. Positions 30 to 59 are NMP; the sequence is STGDIFRANIKNNTELGAKAKEYMDQGLLV. Residues threonine 31, arginine 36, 57-59, 85-88, and glutamine 92 contribute to the AMP site; these read LLV and GFPR. The segment at 126-163 is LID; that stretch reads GRRACVSCGGTYHVVFTPTKKEGICDACGGELTIRDDD. Residue arginine 127 coordinates ATP. Cysteine 130 and cysteine 133 together coordinate Zn(2+). 136 to 137 is an ATP binding site; that stretch reads TY. Cysteine 150 and cysteine 153 together coordinate Zn(2+). AMP-binding residues include arginine 160 and arginine 171. Residue lysine 199 coordinates ATP.

Belongs to the adenylate kinase family. Monomer.

It localises to the cytoplasm. The enzyme catalyses AMP + ATP = 2 ADP. It participates in purine metabolism; AMP biosynthesis via salvage pathway; AMP from ADP: step 1/1. Its function is as follows. Catalyzes the reversible transfer of the terminal phosphate group between ATP and AMP. Plays an important role in cellular energy homeostasis and in adenine nucleotide metabolism. The polypeptide is Adenylate kinase (Lachnoclostridium phytofermentans (strain ATCC 700394 / DSM 18823 / ISDg) (Clostridium phytofermentans)).